Reading from the N-terminus, the 203-residue chain is Outer-membrane lipoprotein LolB (203 aa).

A signal peptide spans 1 to 21 (MRLSASLFHIALVTVLLVLAG). Cys-22 carries the N-palmitoyl cysteine lipid modification. Cys-22 is lipidated: S-diacylglycerol cysteine.

This sequence belongs to the LolB family. As to quaternary structure, monomer.

Its subcellular location is the cell outer membrane. Its function is as follows. Plays a critical role in the incorporation of lipoproteins in the outer membrane after they are released by the LolA protein. The protein is Outer-membrane lipoprotein LolB of Shewanella frigidimarina (strain NCIMB 400).